Here is a 396-residue protein sequence, read N- to C-terminus: Aspartate aminotransferase (396 aa).

The L-aspartate site is built by Gly-34, Trp-130, and Asn-183. N6-(pyridoxal phosphate)lysine is present on Lys-246. Arg-374 contacts L-aspartate.

It belongs to the class-I pyridoxal-phosphate-dependent aminotransferase family. As to quaternary structure, homodimer. It depends on pyridoxal 5'-phosphate as a cofactor.

It is found in the cytoplasm. It carries out the reaction L-aspartate + 2-oxoglutarate = oxaloacetate + L-glutamate. The protein is Aspartate aminotransferase (aspC) of Escherichia coli (strain K12).